The primary structure comprises 196 residues: Molybdenum cofactor guanylyltransferase (196 aa).

Residues 10 to 12, lysine 23, asparagine 51, aspartate 69, and aspartate 99 each bind GTP; that span reads LAG. Aspartate 99 contributes to the Mg(2+) binding site.

Belongs to the MobA family. In terms of assembly, monomer. Requires Mg(2+) as cofactor.

The protein resides in the cytoplasm. The enzyme catalyses Mo-molybdopterin + GTP + H(+) = Mo-molybdopterin guanine dinucleotide + diphosphate. Functionally, transfers a GMP moiety from GTP to Mo-molybdopterin (Mo-MPT) cofactor (Moco or molybdenum cofactor) to form Mo-molybdopterin guanine dinucleotide (Mo-MGD) cofactor. In Shewanella sp. (strain W3-18-1), this protein is Molybdenum cofactor guanylyltransferase.